We begin with the raw amino-acid sequence, 465 residues long: Phytase A (465 aa).

Residues 1 to 26 form the signal peptide; it reads MVTLTFLLSAAYLLSGRVSAAPSSAG. Cys30 and Cys39 are joined by a disulfide. 1D-myo-inositol hexakisphosphate contacts are provided by Gln49, Tyr50, Arg80, His81, Arg84, and Thr87. 4 cysteine pairs are disulfide-bonded: Cys70-Cys412, Cys213-Cys463, Cys262-Cys280, and Cys434-Cys442. His81 (nucleophile) is an active-site residue. Asn104 is a glycosylation site (N-linked (GlcNAc...) asparagine). Arg164 provides a ligand contact to 1D-myo-inositol hexakisphosphate. N-linked (GlcNAc...) asparagine glycosylation occurs at Asn205. Asp209 is a 1D-myo-inositol hexakisphosphate binding site. Asn228 carries N-linked (GlcNAc...) asparagine glycosylation. Position 299 (Lys299) interacts with 1D-myo-inositol hexakisphosphate. Residues Asn337 and Asn350 are each glycosylated (N-linked (GlcNAc...) asparagine). 1D-myo-inositol hexakisphosphate is bound by residues His359 and Asp360. An N-linked (GlcNAc...) asparagine glycan is attached at Asn374.

Belongs to the histidine acid phosphatase family. Monomer.

It localises to the secreted. The catalysed reaction is 1D-myo-inositol hexakisphosphate + H2O = 1D-myo-inositol 1,2,4,5,6-pentakisphosphate + phosphate. It carries out the reaction 1D-myo-inositol 1,2,4,5,6-pentakisphosphate + H2O = 1D-myo-inositol 1,2,5,6-tetrakisphosphate + phosphate. The enzyme catalyses 1D-myo-inositol 1,2,5,6-tetrakisphosphate + H2O = 1D-myo-inositol 1,2,6-trisphosphate + phosphate. It catalyses the reaction 1D-myo-inositol 1,2,6-trisphosphate + H2O = 1D-myo-inositol 1,2-bisphosphate + phosphate. The catalysed reaction is 1D-myo-inositol 1,2-bisphosphate + H2O = 1D-myo-inositol 2-phosphate + phosphate. Functionally, catalyzes the phosphate monoester hydrolysis of phytic acid (myo-inositol hexakisphosphate), which results in the stepwise formation of myo-inositol pentakis-, tetrakis-, tris-, bis-, and monophosphates, as well as the liberation of inorganic phosphate. Myo-inositol 2-monophosphate is the end product. Has a broad substrate specificity and is also able to dephosphorylate other classic acid phosphatase substrates such as p-nitrophenyl phosphate, phenyl phosphate, fructose 1,6-bisphosphate, fructose 6-phosphate, glucose 6-phosphate, ribose 5-phosphate, alpha-glycerophosphate, beta-glycerophosphate, 3-phosphoglycerate, phosphoenolpyruvate, as well as ADP and ATP. The protein is Phytase A (phyA) of Aspergillus fumigatus (strain ATCC MYA-4609 / CBS 101355 / FGSC A1100 / Af293) (Neosartorya fumigata).